The chain runs to 528 residues: G patch domain-containing protein 2 (528 aa).

Positions 36–119 (LEESSEQARG…NKKDHSDSDD (84 aa)) are disordered. The segment covering 63–77 (RQARKRRGRKRRSYN) has biased composition (basic residues). Residues 98 to 117 (EPSKDYRENHNNNKKDHSDS) are compositionally biased toward basic and acidic residues. S115, S117, S146, and S195 each carry phosphoserine. Disordered stretches follow at residues 232–282 (SEET…GDDE) and 487–528 (GRDG…GKSA). The segment covering 239 to 252 (NKDKMECEEQKVSD) has biased composition (basic and acidic residues). The G-patch domain maps to 467–513 (ENNIGNRMLQNMGWTPGSGLGRDGKGISEPIQAMQRPKGLGLGFPLP). Positions 514 to 528 (KSTSATTTPNAGKSA) are enriched in polar residues.

In terms of assembly, interacts with DHX15. In terms of tissue distribution, testis.

The protein localises to the nucleus speckle. It localises to the nucleus. The protein resides in the nucleolus. Functionally, enhances the ATPase activity of DHX15 in vitro. The sequence is that of G patch domain-containing protein 2 (GPATCH2) from Homo sapiens (Human).